A 149-amino-acid chain; its full sequence is Large ribosomal subunit protein bL9 (149 aa).

It belongs to the bacterial ribosomal protein bL9 family.

Functionally, binds to the 23S rRNA. The polypeptide is Large ribosomal subunit protein bL9 (Histophilus somni (strain 129Pt) (Haemophilus somnus)).